Consider the following 1215-residue polypeptide: Zinc finger SWIM domain-containing protein 6 (1215 aa).

Disordered stretches follow at residues 1-46 (MAER…RPGP) and 133-161 (AAGGPGDDSGGGGGAGGGGGGGSSSSPAA). Composition is skewed to gly residues over residues 18-38 (PGGGGGGGGSSGGGGGAGGGY) and 133-155 (AAGGPGDDSGGGGGAGGGGGGGS). An SWIM-type zinc finger spans residues 246–283 (CNVAISFDRCKITSVTCSCGNKDIFYCAHVVALSLYRI).

Involved in nervous system development, important for striatal morphology and motor regulation. This chain is Zinc finger SWIM domain-containing protein 6, found in Homo sapiens (Human).